The sequence spans 266 residues: Tryptophan synthase alpha chain (266 aa).

Active-site proton acceptor residues include E45 and D56.

It belongs to the TrpA family. Tetramer of two alpha and two beta chains.

It catalyses the reaction (1S,2R)-1-C-(indol-3-yl)glycerol 3-phosphate + L-serine = D-glyceraldehyde 3-phosphate + L-tryptophan + H2O. It functions in the pathway amino-acid biosynthesis; L-tryptophan biosynthesis; L-tryptophan from chorismate: step 5/5. In terms of biological role, the alpha subunit is responsible for the aldol cleavage of indoleglycerol phosphate to indole and glyceraldehyde 3-phosphate. This is Tryptophan synthase alpha chain from Novosphingobium aromaticivorans (strain ATCC 700278 / DSM 12444 / CCUG 56034 / CIP 105152 / NBRC 16084 / F199).